A 234-amino-acid chain; its full sequence is MINDRETIDLERLSLPHGAPAVVWQISDSPVAYPEAVAAMEVRAAAIAAGEAPELVWLLEHPPLYTSGTSAKPADLLDPRFPMYPTGRGGQITYHGPGQRVAYVMLDLKRRRPDVRAYVAGLEQWIIATLEHFNVKGERREDRVGVWVKRPDKGPGHEDKIAAIGVRLKRWVSFHGIAINVEPDLTHFSAIVPCGVSDPRYGVTSLVDLGLPVTMQDVDVALRAAFEQVFGPTR.

The 185-residue stretch at 50-234 folds into the BPL/LPL catalytic domain; that stretch reads GEAPELVWLL…AFEQVFGPTR (185 aa). Residues 88-95, 163-165, and 176-178 contribute to the substrate site; these read RGGQITYH, AIG, and GIA. The active-site Acyl-thioester intermediate is the C194.

This sequence belongs to the LipB family.

The protein resides in the cytoplasm. It carries out the reaction octanoyl-[ACP] + L-lysyl-[protein] = N(6)-octanoyl-L-lysyl-[protein] + holo-[ACP] + H(+). It participates in protein modification; protein lipoylation via endogenous pathway; protein N(6)-(lipoyl)lysine from octanoyl-[acyl-carrier-protein]: step 1/2. Catalyzes the transfer of endogenously produced octanoic acid from octanoyl-acyl-carrier-protein onto the lipoyl domains of lipoate-dependent enzymes. Lipoyl-ACP can also act as a substrate although octanoyl-ACP is likely to be the physiological substrate. This is Octanoyltransferase from Rhodopseudomonas palustris (strain BisA53).